The primary structure comprises 496 residues: Glycerol kinase (496 aa).

Residue Thr12 coordinates ADP. ATP contacts are provided by Thr12, Thr13, and Ser14. Position 12 (Thr12) interacts with sn-glycerol 3-phosphate. Residue Arg16 participates in ADP binding. Residues Arg82, Glu83, and Tyr134 each coordinate sn-glycerol 3-phosphate. Glycerol-binding residues include Arg82, Glu83, and Tyr134. His230 carries the post-translational modification Phosphohistidine; by HPr. Residue Asp244 coordinates sn-glycerol 3-phosphate. The glycerol site is built by Asp244 and Gln245. Residues Thr266 and Gly309 each contribute to the ADP site. 4 residues coordinate ATP: Thr266, Gly309, Gln313, and Gly410. ADP-binding residues include Gly410 and Asn414.

It belongs to the FGGY kinase family. As to quaternary structure, homotetramer and homodimer (in equilibrium). The phosphoenolpyruvate-dependent sugar phosphotransferase system (PTS), including enzyme I, and histidine-containing protein (HPr) are required for the phosphorylation, which leads to the activation of the enzyme.

The enzyme catalyses glycerol + ATP = sn-glycerol 3-phosphate + ADP + H(+). It functions in the pathway polyol metabolism; glycerol degradation via glycerol kinase pathway; sn-glycerol 3-phosphate from glycerol: step 1/1. Its activity is regulated as follows. Activated by phosphorylation and inhibited by fructose 1,6-bisphosphate (FBP). In terms of biological role, key enzyme in the regulation of glycerol uptake and metabolism. Catalyzes the phosphorylation of glycerol to yield sn-glycerol 3-phosphate. The sequence is that of Glycerol kinase from Bacillus cereus (strain Q1).